The primary structure comprises 458 residues: Transmembrane protein 143 (458 aa).

2 helical membrane passes run 277-297 and 298-318; these read LLNL…GMVI and LSDL…FMGV. Residue S329 is modified to Phosphoserine.

The protein resides in the membrane. The protein is Transmembrane protein 143 (Tmem143) of Mus musculus (Mouse).